The following is a 280-amino-acid chain: Protein MGF 505-3R (280 aa).

It belongs to the asfivirus MGF 505 family.

Functionally, plays a role in virus cell tropism, and may be required for efficient virus replication in macrophages. The protein is Protein MGF 505-3R of African swine fever virus (isolate Warthog/Namibia/Wart80/1980) (ASFV).